The sequence spans 176 residues: Translation initiation factor IF-3 (176 aa).

Belongs to the IF-3 family. Monomer.

The protein localises to the cytoplasm. Functionally, IF-3 binds to the 30S ribosomal subunit and shifts the equilibrium between 70S ribosomes and their 50S and 30S subunits in favor of the free subunits, thus enhancing the availability of 30S subunits on which protein synthesis initiation begins. This Nitratidesulfovibrio vulgaris (strain DSM 19637 / Miyazaki F) (Desulfovibrio vulgaris) protein is Translation initiation factor IF-3.